The chain runs to 149 residues: MADQLTEEQIAEFKEAFSLFDKDGDGTITTKELGTVMRSLGQNPTEAELQDMINEVDADGNGTIDFPEFLTMMARKMKDTDSEEEIREAFRVFDKDGNGFISAAELRHVMTNLGEKLTDEEVDEMIREADIDGDGQVNYEEFVTMMTSK.

Ala-2 carries the post-translational modification N-acetylalanine. 4 consecutive EF-hand domains span residues 8 to 43 (EQIAEFKEAFSLFDKDGDGTITTKELGTVMRSLGQN), 44 to 79 (PTEAELQDMINEVDADGNGTIDFPEFLTMMARKMKD), 81 to 116 (DSEEEIREAFRVFDKDGNGFISAAELRHVMTNLGEK), and 117 to 149 (LTDEEVDEMIREADIDGDGQVNYEEFVTMMTSK). Ca(2+)-binding residues include Asp-21, Asp-23, Asp-25, Thr-27, Glu-32, Asp-57, Asp-59, Asn-61, Thr-63, Glu-68, Asp-94, Asp-96, Asn-98, and Glu-105. Lys-116 is subject to N6,N6,N6-trimethyllysine. Residues Asp-130, Asp-132, Asp-134, Gln-136, and Glu-141 each coordinate Ca(2+).

Belongs to the calmodulin family.

Its function is as follows. Calmodulin mediates the control of a large number of enzymes, ion channels and other proteins by Ca(2+). Among the enzymes to be stimulated by the calmodulin-Ca(2+) complex are a number of protein kinases and phosphatases. This Branchiostoma floridae (Florida lancelet) protein is Calmodulin-1.